The chain runs to 192 residues: Protein GrpE (192 aa).

The disordered stretch occupies residues 1 to 34; the sequence is MSSKEQKTPNEQVSEEMENAAEQQVEATQETGEG. The span at 21-31 shows a compositional bias: polar residues; it reads AEQQVEATQET.

Belongs to the GrpE family. As to quaternary structure, homodimer.

The protein resides in the cytoplasm. Its function is as follows. Participates actively in the response to hyperosmotic and heat shock by preventing the aggregation of stress-denatured proteins, in association with DnaK and GrpE. It is the nucleotide exchange factor for DnaK and may function as a thermosensor. Unfolded proteins bind initially to DnaJ; upon interaction with the DnaJ-bound protein, DnaK hydrolyzes its bound ATP, resulting in the formation of a stable complex. GrpE releases ADP from DnaK; ATP binding to DnaK triggers the release of the substrate protein, thus completing the reaction cycle. Several rounds of ATP-dependent interactions between DnaJ, DnaK and GrpE are required for fully efficient folding. This chain is Protein GrpE, found in Yersinia enterocolitica serotype O:8 / biotype 1B (strain NCTC 13174 / 8081).